Consider the following 150-residue polypeptide: Macrodomain Ter protein (150 aa).

The protein belongs to the MatP family. Homodimer.

It is found in the cytoplasm. Required for spatial organization of the terminus region of the chromosome (Ter macrodomain) during the cell cycle. Prevents early segregation of duplicated Ter macrodomains during cell division. Binds specifically to matS, which is a 13 bp signature motif repeated within the Ter macrodomain. This is Macrodomain Ter protein from Escherichia coli (strain SMS-3-5 / SECEC).